Consider the following 190-residue polypeptide: Heme-binding protein 1 (190 aa).

Belongs to the HEBP family. As to quaternary structure, monomer.

It localises to the cytoplasm. In terms of biological role, may bind free porphyrinogens that may be present in the cell and thus facilitate removal of these potentially toxic compound. Binds with a high affinity to one molecule of heme or porphyrins. It binds metalloporphyrins, free porphyrins and N-methylprotoporphyrin with similar affinities. The chain is Heme-binding protein 1 (hebp1) from Xenopus laevis (African clawed frog).